Here is a 600-residue protein sequence, read N- to C-terminus: Aspartate--tRNA(Asp/Asn) ligase (600 aa).

Residue Glu-174 participates in L-aspartate binding. An aspartate region spans residues Gln-198–Lys-201. L-aspartate is bound at residue Arg-220. ATP-binding positions include Arg-220–Glu-222 and Gln-229. Position 457 (His-457) interacts with L-aspartate. ATP is bound at residue Glu-491. Arg-498 contacts L-aspartate. Gly-543–Arg-546 is an ATP binding site.

The protein belongs to the class-II aminoacyl-tRNA synthetase family. Type 1 subfamily. In terms of assembly, homodimer.

The protein resides in the cytoplasm. It catalyses the reaction tRNA(Asx) + L-aspartate + ATP = L-aspartyl-tRNA(Asx) + AMP + diphosphate. Its function is as follows. Aspartyl-tRNA synthetase with relaxed tRNA specificity since it is able to aspartylate not only its cognate tRNA(Asp) but also tRNA(Asn). Reaction proceeds in two steps: L-aspartate is first activated by ATP to form Asp-AMP and then transferred to the acceptor end of tRNA(Asp/Asn). This chain is Aspartate--tRNA(Asp/Asn) ligase, found in Burkholderia orbicola (strain AU 1054).